Here is a 551-residue protein sequence, read N- to C-terminus: Serine beta-lactamase-like protein LACTB, mitochondrial (551 aa).

The N-terminal 113 residues, 1–113, are a transit peptide targeting the mitochondrion; it reads MYRLLSSVTA…RAIESSRDLL (113 aa). The tract at residues 69–101 is disordered; sequence PADPEASGTTELSHEQALSPGSPHTPAPPAARG. Ser162 serves as the catalytic Acyl-ester intermediate. Positions 237-287 are disordered; sequence LKMVKGTPPPSDQEKELKEKGGKNNEKSDAPKAKVEQDSEARCRSAKPGKK. Residues 248 to 279 show a composition bias toward basic and acidic residues; sequence DQEKELKEKGGKNNEKSDAPKAKVEQDSEARC. N6-succinyllysine is present on residues Lys287 and Lys288. Residues Lys301 and Lys346 each carry the N6-acetyllysine modification.

The protein belongs to the peptidase S12 family. In terms of tissue distribution, expressed predominantly in liver.

The protein resides in the mitochondrion. Functionally, mitochondrial serine protease that acts as a regulator of mitochondrial lipid metabolism. Acts by decreasing protein levels of PISD, a mitochondrial enzyme that converts phosphatidylserine (PtdSer) to phosphatidylethanolamine (PtdEtn), thereby affecting mitochondrial lipid metabolism. It is unclear whether it acts directly by mediating proteolysis of PISD or by mediating proteolysis of another lipid metabolism protein. Acts as a tumor suppressor that has the ability to inhibit proliferation of multiple types of cancer cells: probably by promoting decreased levels of PISD, thereby affecting mitochondrial lipid metabolism. This chain is Serine beta-lactamase-like protein LACTB, mitochondrial, found in Mus musculus (Mouse).